The following is a 520-amino-acid chain: Type I restriction enzyme EcoprrI methylase subunit (520 aa).

Residues 198–203 (EFFTPQ), 230–232 (SGS), and glutamate 254 each bind S-adenosyl-L-methionine.

This sequence belongs to the N(4)/N(6)-methyltransferase family. As to quaternary structure, the type I restriction/modification system is composed of three polypeptides R, M and S; the restriction enzyme has stoichiometry R(2)M(2)S(1) while the methyltransferase is M(2)S(1).

The catalysed reaction is a 2'-deoxyadenosine in DNA + S-adenosyl-L-methionine = an N(6)-methyl-2'-deoxyadenosine in DNA + S-adenosyl-L-homocysteine + H(+). In terms of biological role, the subtype gamma methyltransferase (M) subunit of a type I restriction enzyme. The M and S subunits together form a methyltransferase (MTase) that methylates two adenine residues of the sequence 5'-CCAN(7)ATGC-3'. In the presence of the R subunit the complex can also act as an endonuclease, binding to the same target sequence but cutting the DNA some distance from this site. Whether the DNA is cut or modified depends on the methylation state of the target sequence. When the target site is unmodified, the DNA is cut. When the target site is hemimethylated, the complex acts as a maintenance MTase modifying the DNA so that both strands become methylated. After locating a non-methylated recognition site, the enzyme complex serves as a molecular motor that translocates DNA in an ATP-dependent manner until a collision occurs that triggers cleavage. This Escherichia coli protein is Type I restriction enzyme EcoprrI methylase subunit.